We begin with the raw amino-acid sequence, 203 residues long: Small ribosomal subunit protein uS4 (203 aa).

The S4 RNA-binding domain occupies 93-156; it reads TRLDNLVFRL…QNLAIVNEAI (64 aa).

This sequence belongs to the universal ribosomal protein uS4 family. In terms of assembly, part of the 30S ribosomal subunit. Contacts protein S5. The interaction surface between S4 and S5 is involved in control of translational fidelity.

In terms of biological role, one of the primary rRNA binding proteins, it binds directly to 16S rRNA where it nucleates assembly of the body of the 30S subunit. Functionally, with S5 and S12 plays an important role in translational accuracy. This chain is Small ribosomal subunit protein uS4, found in Lacticaseibacillus casei (strain BL23) (Lactobacillus casei).